Here is an 833-residue protein sequence, read N- to C-terminus: MLGFLFKKVFGSKNDRYIKRLRPIVAAINALEPQMQSLRDEDFPVRIAEYRQQVEEGRKLDDMLPEVFALVREAGKRVFNMRHFDVQLVGGMALHHGKIAEMKTGEGKTLVATLPVVLNALTGKGVHVVTVNDYLAKRDAAWMGQLYNFLGLSVGVIVHGLDDEQRKAAYGADITYGTNNEFGFDYLRDNMKFYAEQLVQRGHNFAIVDEVDSILIDEARTPLIISGASEESTGLYRHMDEIVRKLTRDTHFTVDEKARTAMLTDEGVAFCEKLVGIDNLYDPGNITTQHHLMQALKAHNLFRRDVDYIVKEGQVVIVDEFTGRLMPGRRFSDGLHQALEAKEAVKIEAENQTLASITFQNYFRMYAKLAGMTGTADTEAVEFHQIYSLEVVSIPTNKPMQRKDFADAIYRTKREKYDAIAQAIAELHKAGQPVLVGTISIETSELLSTMLKKTGVPHSVLNAKHHEKEAEIVALAGQRGHVTIATNMAGRGTDIVLGEGVRELGGLHILGTERHESRRIDNQLRGRSGRQGDPGSSRFYLSLEDDLMRLFGSERISGLMEKLGMEEGEPIEARMVSRAIENAQKRVEGHNFEIRKTLLDYDNVMNQQREVIYTLRRDAMSAPDLGPTMEEFLDDVLEDVYAPAEGGEAPSADTVAAVWGRLADVCNITRVMQPAPALPTRDEARAAVLSILHELREDTGESYRDIIRYFMLEELDRCWKEHLRNMDHLRDGIGLRGYGQRDPKLEYKREGFAMFQEMLFRIKEGVFRSLTRLRVQRVEEEAFRHKEQPAAVAYSGGEAEAGPAQPHREDPKVGRNDLCPCGSGRKYKKCCGA.

ATP is bound by residues Gln-87, 105 to 109, and Asp-494; that span reads GEGKT. The tract at residues 789–816 is disordered; that stretch reads PAAVAYSGGEAEAGPAQPHREDPKVGRN. Basic and acidic residues predominate over residues 806–815; the sequence is PHREDPKVGR. Positions 819, 821, 830, and 831 each coordinate Zn(2+).

It belongs to the SecA family. Monomer and homodimer. Part of the essential Sec protein translocation apparatus which comprises SecA, SecYEG and auxiliary proteins SecDF-YajC and YidC. Requires Zn(2+) as cofactor.

It is found in the cell inner membrane. Its subcellular location is the cytoplasm. It carries out the reaction ATP + H2O + cellular proteinSide 1 = ADP + phosphate + cellular proteinSide 2.. Functionally, part of the Sec protein translocase complex. Interacts with the SecYEG preprotein conducting channel. Has a central role in coupling the hydrolysis of ATP to the transfer of proteins into and across the cell membrane, serving as an ATP-driven molecular motor driving the stepwise translocation of polypeptide chains across the membrane. In Nitratidesulfovibrio vulgaris (strain ATCC 29579 / DSM 644 / CCUG 34227 / NCIMB 8303 / VKM B-1760 / Hildenborough) (Desulfovibrio vulgaris), this protein is Protein translocase subunit SecA.